Reading from the N-terminus, the 1372-residue chain is uncharacterized protein (1372 aa).

Positions Met1 to Gln67 are disordered. The segment covering Met17–Gly28 has biased composition (polar residues). Residues Asn75–Lys143 are a coiled coil. Disordered regions lie at residues Asn178–Asp199, His238–Ser287, Glu380–Arg414, Gln427–Pro447, and Glu486–Ile531. Low complexity-rich tracts occupy residues Gly184 to Gly198 and His238 to Gly251. Polar residues-rich tracts occupy residues Thr257–Ser287 and Thr399–Pro408. A coiled-coil region spans residues Lys409–Ser438. Residues Glu486 to Ser499 are compositionally biased toward basic and acidic residues. The segment covering Ala514–Ala523 has biased composition (low complexity). A coiled-coil region spans residues Leu539 to His580. Low complexity predominate over residues Val652–Asn673. Disordered regions lie at residues Val652 to Lys679, Ser799 to His820, Ser860 to Val897, Ser1151 to Lys1181, and Ser1231 to Lys1250. Composition is skewed to polar residues over residues Ser860–Ile871 and Ser1151–Pro1160.

This is an uncharacterized protein from Drosophila melanogaster (Fruit fly).